The primary structure comprises 365 residues: Phosphatidylcholine:ceramide cholinephosphotransferase 2 (365 aa).

Residues 9–50 (LEGHLESQTNNSTNTYTSPTEAVEEEDKNGKGKPKTLSNGLR) form a disordered region. Residues 15–28 (SQTNNSTNTYTSPT) show a composition bias toward low complexity. The next 5 helical transmembrane spans lie at 80-100 (GIAF…ITVV), 128-148 (FSVS…QWLF), 159-179 (FFFI…VTTL), 219-239 (ILCG…TYLF), and 248-268 (FWWY…CILV). Residue histidine 229 is part of the active site. Catalysis depends on residues histidine 272 and aspartate 276. The chain crosses the membrane as a helical span at residues 273 to 290 (YTVDVIIAYYITTRLFWW). The Cytoplasmic portion of the chain corresponds to 291-365 (YHSMANEKNL…KIGEDNEKST (75 aa)). S-palmitoyl cysteine attachment occurs at residues cysteine 331, cysteine 332, cysteine 343, and cysteine 348.

This sequence belongs to the sphingomyelin synthase family. In terms of processing, palmitoylated on Cys-331, Cys-332, Cys-343 and Cys-348; which plays an important role in plasma membrane localization. In terms of tissue distribution, expression restricted to late round spermatids and elongating spermatids but not detected in late elongate spermatids and Sertoli cells (at protein level).

The protein localises to the cell membrane. It localises to the golgi apparatus membrane. The enzyme catalyses an N-acylsphing-4-enine + a 1,2-diacyl-sn-glycero-3-phosphocholine = a sphingomyelin + a 1,2-diacyl-sn-glycerol. It catalyses the reaction an N-acylsphinganine + a 1,2-diacyl-sn-glycero-3-phosphocholine = an N-acylsphinganine-1-phosphocholine + a 1,2-diacyl-sn-glycerol. The catalysed reaction is an N-acyl-(4R)-4-hydroxysphinganine + a 1,2-diacyl-sn-glycero-3-phosphocholine = an N-acyl-(4R)-4-hydroxysphinganine-phosphocholine + a 1,2-diacyl-sn-glycerol. It carries out the reaction an N-acylsphing-4-enine + a 1,2-diacyl-sn-glycero-3-phosphoethanolamine = an N-acylsphing-4-enine 1-phosphoethanolamine + a 1,2-diacyl-sn-glycerol. The enzyme catalyses an N-acylsphinganine + a 1,2-diacyl-sn-glycero-3-phosphoethanolamine = an N-acylsphinganine-1-phosphoethanolamine + a 1,2-diacyl-sn-glycerol. It catalyses the reaction an N-acyl-(4R)-4-hydroxysphinganine + a 1,2-diacyl-sn-glycero-3-phosphoethanolamine = an N-acyl-(4R)-4-hydroxysphinganine-1-phosphoethanolamine + a 1,2-diacyl-sn-glycerol. The catalysed reaction is 1,2-dihexadecanoyl-sn-glycero-3-phosphocholine + an N-acylsphing-4-enine = 1,2-dihexadecanoyl-sn-glycerol + a sphingomyelin. It carries out the reaction 1-(9Z-octadecenoyl)-2-acyl-sn-3-glycerol + a sphingomyelin = a 1-(9Z-octadecenoyl)-2-acyl-sn-glycero-3-phosphocholine + an N-acylsphing-4-enine. The enzyme catalyses N-hexadecanoylsphinganine + a 1,2-diacyl-sn-glycero-3-phosphocholine = N-hexadecanoyl-sphinganine-1-phosphocholine + a 1,2-diacyl-sn-glycerol. It catalyses the reaction N-hexadecanoyl-(4R)-hydroxysphinganine + a 1,2-diacyl-sn-glycero-3-phosphocholine = N-hexadecanoyl-(4R)-hydroxysphinganine-phosphocholine + a 1,2-diacyl-sn-glycerol. The catalysed reaction is N-hexadecanoylsphinganine + a 1,2-diacyl-sn-glycero-3-phosphoethanolamine = N-hexadecanoyl-sphinganine-1-phosphoethanolamine + a 1,2-diacyl-sn-glycerol. It carries out the reaction N-hexadecanoyl-(4R)-hydroxysphinganine + a 1,2-diacyl-sn-glycero-3-phosphoethanolamine = N-hexadecanoyl-(4R)-hydroxysphinganine-1-phosphoethanolamine + a 1,2-diacyl-sn-glycerol. Its pathway is sphingolipid metabolism. Sphingomyelin synthase that primarily contributes to sphingomyelin synthesis and homeostasis at the plasma membrane. Catalyzes the reversible transfer of phosphocholine moiety in sphingomyelin biosynthesis: in the forward reaction transfers phosphocholine head group of phosphatidylcholine (PC) on to ceramide (CER) to form ceramide phosphocholine (sphingomyelin, SM) and diacylglycerol (DAG) as by-product, and in the reverse reaction transfers phosphocholine from SM to DAG to form PC and CER. The direction of the reaction appears to depend on the levels of CER and DAG in the plasma membrane. Does not use free phosphorylcholine or CDP-choline as donors. Can also transfer phosphoethanolamine head group of phosphatidylethanolamine (PE) on to ceramide (CER) to form ceramide phosphoethanolamine (CPE). Regulates receptor-mediated signal transduction via mitogenic DAG and proapoptotic CER, as well as via SM, a structural component of membrane rafts that serve as platforms for signal transduction and protein sorting. To a lesser extent, plays a role in secretory transport via regulation of DAG pool at the Golgi apparatus and its downstream effects on PRKD1. Required for normal bone matrix mineralization. This chain is Phosphatidylcholine:ceramide cholinephosphotransferase 2 (Sgms2), found in Rattus norvegicus (Rat).